A 266-amino-acid chain; its full sequence is Vitamin B12-binding protein (266 aa).

The first 22 residues, 1–22 (MAKQMFRALVALLLTLPVWLYA), serve as a signal peptide directing secretion. In terms of domain architecture, Fe/B12 periplasmic-binding spans 25–266 (RVITLSPANT…QLCNALSQVN (242 aa)). Residues tyrosine 50 and 242 to 246 (DWFER) contribute to the cyanocob(III)alamin site. Cysteine 183 and cysteine 259 are oxidised to a cystine.

Belongs to the BtuF family. In terms of assembly, the complex is composed of two ATP-binding proteins (BtuD), two transmembrane proteins (BtuC) and a solute-binding protein (BtuF).

The protein resides in the periplasm. Its function is as follows. Part of the ABC transporter complex BtuCDF involved in vitamin B12 import. Binds vitamin B12 and delivers it to the periplasmic surface of BtuC. The protein is Vitamin B12-binding protein of Salmonella paratyphi A (strain ATCC 9150 / SARB42).